Here is a 138-residue protein sequence, read N- to C-terminus: Small ribosomal subunit protein uS12 (138 aa).

The interval 1 to 20 (MPTISQLINHGRSAKTSKSK) is disordered. At Asp102 the chain carries 3-methylthioaspartic acid. Residues 116-138 (DAAGVDKRKQGRSIYGTKKPKEN) are disordered.

Belongs to the universal ribosomal protein uS12 family. Part of the 30S ribosomal subunit. Contacts proteins S8 and S17. May interact with IF1 in the 30S initiation complex.

In terms of biological role, with S4 and S5 plays an important role in translational accuracy. Its function is as follows. Interacts with and stabilizes bases of the 16S rRNA that are involved in tRNA selection in the A site and with the mRNA backbone. Located at the interface of the 30S and 50S subunits, it traverses the body of the 30S subunit contacting proteins on the other side and probably holding the rRNA structure together. The combined cluster of proteins S8, S12 and S17 appears to hold together the shoulder and platform of the 30S subunit. This chain is Small ribosomal subunit protein uS12, found in Metamycoplasma arthritidis (strain 158L3-1) (Mycoplasma arthritidis).